Here is a 616-residue protein sequence, read N- to C-terminus: Proline--tRNA ligase (616 aa).

Belongs to the class-II aminoacyl-tRNA synthetase family. ProS type 1 subfamily. As to quaternary structure, homodimer.

It is found in the cytoplasm. It catalyses the reaction tRNA(Pro) + L-proline + ATP = L-prolyl-tRNA(Pro) + AMP + diphosphate. Functionally, catalyzes the attachment of proline to tRNA(Pro) in a two-step reaction: proline is first activated by ATP to form Pro-AMP and then transferred to the acceptor end of tRNA(Pro). As ProRS can inadvertently accommodate and process non-cognate amino acids such as alanine and cysteine, to avoid such errors it has two additional distinct editing activities against alanine. One activity is designated as 'pretransfer' editing and involves the tRNA(Pro)-independent hydrolysis of activated Ala-AMP. The other activity is designated 'posttransfer' editing and involves deacylation of mischarged Ala-tRNA(Pro). The misacylated Cys-tRNA(Pro) is not edited by ProRS. This chain is Proline--tRNA ligase, found in Streptococcus sanguinis (strain SK36).